Consider the following 249-residue polypeptide: Salivary antigen-5 (249 aa).

The signal sequence occupies residues 1-26 (MAKTQCPLVFSLLALALIGTLQSSAA). The SCP domain maps to 50-193 (SIHNYYRNLT…WYAGYLVCNY (144 aa)). Asparagine 57, asparagine 127, and asparagine 168 each carry an N-linked (GlcNAc...) asparagine glycan.

It belongs to the CRISP family. Venom allergen 5-like subfamily. Monomeric in solution. Cu(2+) serves as cofactor. As to expression, saliva (at protein level). Salivary gland (at protein level).

It is found in the secreted. In terms of biological role, antioxidant protein that scavenges superoxide radicals. Removes superoxide radicals produced by PMA-stimulated host neutrophils. Inhibits host platelet aggregation induced by low doses of collagen by interfering with the pro-aggregatory properties of reactive oxygen species on platelets. Binds to heparin and sulfated glycosaminoglycans. This is Salivary antigen-5 from Dipetalogaster maximus (Blood-sucking bug).